The primary structure comprises 61 residues: Large ribosomal subunit protein eL24 (61 aa).

Zn(2+)-binding residues include C7, C10, C33, and C37. Residues C7–C37 form a C4-type zinc finger.

This sequence belongs to the eukaryotic ribosomal protein eL24 family. As to quaternary structure, part of the 50S ribosomal subunit. Forms a cluster with proteins L3 and L14. Zn(2+) is required as a cofactor.

In terms of biological role, binds to the 23S rRNA. This Hyperthermus butylicus (strain DSM 5456 / JCM 9403 / PLM1-5) protein is Large ribosomal subunit protein eL24.